Consider the following 217-residue polypeptide: Imidazole glycerol phosphate synthase subunit HisH (217 aa).

One can recognise a Glutamine amidotransferase type-1 domain in the interval 3–217; that stretch reads TIAIVDYGVG…LYRNFVHWNP (215 aa). Catalysis depends on Cys-82, which acts as the Nucleophile. Catalysis depends on residues His-197 and Glu-199.

As to quaternary structure, heterodimer of HisH and HisF.

It is found in the cytoplasm. It catalyses the reaction 5-[(5-phospho-1-deoxy-D-ribulos-1-ylimino)methylamino]-1-(5-phospho-beta-D-ribosyl)imidazole-4-carboxamide + L-glutamine = D-erythro-1-(imidazol-4-yl)glycerol 3-phosphate + 5-amino-1-(5-phospho-beta-D-ribosyl)imidazole-4-carboxamide + L-glutamate + H(+). It carries out the reaction L-glutamine + H2O = L-glutamate + NH4(+). The protein operates within amino-acid biosynthesis; L-histidine biosynthesis; L-histidine from 5-phospho-alpha-D-ribose 1-diphosphate: step 5/9. In terms of biological role, IGPS catalyzes the conversion of PRFAR and glutamine to IGP, AICAR and glutamate. The HisH subunit catalyzes the hydrolysis of glutamine to glutamate and ammonia as part of the synthesis of IGP and AICAR. The resulting ammonia molecule is channeled to the active site of HisF. The chain is Imidazole glycerol phosphate synthase subunit HisH from Cupriavidus pinatubonensis (strain JMP 134 / LMG 1197) (Cupriavidus necator (strain JMP 134)).